Consider the following 276-residue polypeptide: NH(3)-dependent NAD(+) synthetase (276 aa).

43 to 50 (GISGGVDS) is a binding site for ATP. Position 49 (D49) interacts with Mg(2+). R146 is a deamido-NAD(+) binding site. An ATP-binding site is contributed by T166. Residue E171 participates in Mg(2+) binding. Deamido-NAD(+) contacts are provided by K179 and D186. ATP is bound by residues K195 and T217. 266 to 267 (HK) serves as a coordination point for deamido-NAD(+).

The protein belongs to the NAD synthetase family. Homodimer.

The catalysed reaction is deamido-NAD(+) + NH4(+) + ATP = AMP + diphosphate + NAD(+) + H(+). It participates in cofactor biosynthesis; NAD(+) biosynthesis; NAD(+) from deamido-NAD(+) (ammonia route): step 1/1. In terms of biological role, catalyzes the ATP-dependent amidation of deamido-NAD to form NAD. Uses ammonia as a nitrogen source. The polypeptide is NH(3)-dependent NAD(+) synthetase (Shewanella putrefaciens (strain CN-32 / ATCC BAA-453)).